The primary structure comprises 752 residues: Complement C2 (752 aa).

Residues 1 to 20 form the signal peptide; the sequence is MGPLMVLFCLLFLYPGLADS. 3 consecutive Sushi domains span residues 22–86, 87–146, and 149–206; these read PSCP…VCKP, VRCP…VCDN, and GHCP…ICRQ. Intrachain disulfides connect Cys24–Cys64, Cys51–Cys84, Cys89–Cys131, Cys117–Cys144, Cys151–Cys191, and Cys177–Cys204. The N-linked (GlcNAc...) asparagine glycan is linked to Asn29. Asn112 carries N-linked (GlcNAc...) asparagine glycosylation. Residues 254–452 enclose the VWFA domain; it reads NLYLLLDCSQ…KALHQVFEHM (199 aa). The MIDAS-like motif motif lies at 260–264; it reads DCSQS. Mg(2+)-binding residues include Ser262 and Ser264. N-linked (GlcNAc...) asparagine glycosylation is found at Asn290 and Asn333. Thr337 lines the Mg(2+) pocket. Intrachain disulfides connect Cys463–Cys581, Cys492–Cys508, and Cys584–Cys600. The Peptidase S1 domain maps to 464 to 744; sequence GVGNMSANAS…MQPWLRQHLG (281 aa). 2 N-linked (GlcNAc...) asparagine glycosylation sites follow: Asn467 and Asn471. Residues His507 and Asp561 each act as charge relay system in the active site. An N-linked (GlcNAc...) asparagine glycan is attached at Asn621. 2 disulfides stabilise this stretch: Cys638/Cys665 and Cys675/Cys705. Ser679 (charge relay system) is an active-site residue.

The protein belongs to the peptidase S1 family. In terms of assembly, serine protease component of the C3 convertase, also named C4bC2b, composed of the serine protease complement C2b and complement C4b. Serine protease component of the C5 convertase, also named C4bC2bC3b, composed of the serine protease complement C2b, complement C3b, as well as complement C4b. Mg(2+) serves as cofactor. Mn(2+) is required as a cofactor. In terms of processing, cleaved and activated by different proteases depending on the complement pathway to generate complement C2a and serine protease complement C2b chains. Cleaved and activated by C1S following activation by the classical complement system. Cleaved and activated by MASP2 following activation by the lectin complement system. Cleaved and activated by GZMK following activation by the GZMK complement system.

Its subcellular location is the secreted. The protein resides in the cell surface. The catalysed reaction is Selective cleavage of Arg-|-Ser bond in complement component C3 alpha-chain to form C3a and C3b, and Arg-|-Xaa bond in complement component C5 alpha-chain to form C5a and C5b.. Functionally, precursor of the catalytic component of the C3 and C5 convertase complexes, which are part of the complement pathway, a cascade of proteins that leads to phagocytosis and breakdown of pathogens and signaling that strengthens the adaptive immune system. Component C2 is part of the classical, lectin and GZMK complement systems. In terms of biological role, catalytic component of the complement C3 and C5 convertase complexes. Following complement activation, recruited to the surface of pathogens by complement C4b opsonin to form the C3 convertase, or C3b and C4b opsonins to form the C5 convertase. As part of the C3 convertase, cleaves and activate C3 into C3a anaphylatoxin and C3b opsonin, the next components of the complement pathways. As part of the C5 convertase, cleaves and activate C5 into C5a anaphylatoxin and C5b component of the membrane attack complex. The polypeptide is Complement C2 (Pongo pygmaeus (Bornean orangutan)).